Consider the following 973-residue polypeptide: E3 ubiquitin-protein ligase BRE1A (973 aa).

The disordered stretch occupies residues 1–37 (MSGIGNKRAAGEPGTSMPPEKKTAVEDSGTTVETIKL). Lysine 21 is modified (N6-acetyllysine). Position 41 is a phosphoserine (serine 41). Residues 43–90 (TEELDIRTLQSKNRKLAEMLDQRQAIEDELREHIEKLERRQATDDASL) adopt a coiled-coil conformation. Positions 128–153 (VVPEPEPDSDSNQERKDDRERGDGQE) are disordered. A phosphoserine mark is found at serine 136 and serine 138. A compositionally biased stretch (basic and acidic residues) spans 139–151 (NQERKDDRERGDG). Coiled-coil stretches lie at residues 168–378 (EEME…VKET) and 429–896 (SLHK…TTKK). 2 positions are modified to N6-acetyllysine: lysine 348 and lysine 510. A disordered region spans residues 507–620 (DLNKTRLRSG…GKHDDGRKKE (114 aa)). At serine 522 the chain carries Phosphoserine. Composition is skewed to basic and acidic residues over residues 527–544 (EDPK…EDLA) and 553–620 (SQED…RKKE). Serine 560 is modified (phosphoserine). The segment at 920–959 (CPCCNMRKKDAVLTKCFHVFCFECVKTRYDTRQRKCPKCN) adopts an RING-type zinc-finger fold.

It belongs to the BRE1 family. Component of the RNF20/40 complex (also known as BRE1 complex) probably composed of 2 copies of RNF20/BRE1A and 2 copies of RNF40/BRE1B. Interacts with UBE2E1/UBCH6. Interacts with p53/TP53 and WAC. Interacts with PAF1; the interaction mediates the association of the PAF1 and RNF20/40 complexes which is a prerequsite for recruitment of UBE2A/B. Interacts with PA2G4. Interacts with FBXL19.

It localises to the nucleus. It catalyses the reaction S-ubiquitinyl-[E2 ubiquitin-conjugating enzyme]-L-cysteine + [acceptor protein]-L-lysine = [E2 ubiquitin-conjugating enzyme]-L-cysteine + N(6)-ubiquitinyl-[acceptor protein]-L-lysine.. It participates in protein modification; protein ubiquitination. In terms of biological role, component of the RNF20/40 E3 ubiquitin-protein ligase complex that mediates monoubiquitination of 'Lys-120' of histone H2B (H2BK120ub1). H2BK120ub1 gives a specific tag for epigenetic transcriptional activation and is also prerequisite for histone H3 'Lys-4' and 'Lys-79' methylation (H3K4me and H3K79me, respectively). It thereby plays a central role in histone code and gene regulation. The RNF20/40 complex forms a H2B ubiquitin ligase complex in cooperation with the E2 enzyme UBE2A or UBE2B; reports about the cooperation with UBE2E1/UBCH are contradictory. Required for transcriptional activation of Hox genes. Recruited to the MDM2 promoter, probably by being recruited by p53/TP53, and thereby acts as a transcriptional coactivator. Mediates the polyubiquitination of PA2G4 leading to its proteasome-mediated degradation. In Mus musculus (Mouse), this protein is E3 ubiquitin-protein ligase BRE1A (Rnf20).